A 196-amino-acid chain; its full sequence is Putative NADH dehydrogenase/NAD(P)H nitroreductase Smlt0482 (196 aa).

This sequence belongs to the nitroreductase family. HadB/RutE subfamily. Requires FMN as cofactor.

The protein is Putative NADH dehydrogenase/NAD(P)H nitroreductase Smlt0482 of Stenotrophomonas maltophilia (strain K279a).